The primary structure comprises 1195 residues: Cullin-associated NEDD8-dissociated protein 1 (1195 aa).

HEAT repeat units lie at residues 1-37 (MHDINFNILKDRAMDVDPDIRFMALEDLRKFLQDESA), 45-83 (NQSLENFFPILLNMLNDQNPDVQTQAIKSFEPMVKYLSN), 168-206 (NPVTIDSIELLIDLVTEIGYVLTQDELLNLSLYLTKVAL), 397-434 (ELLSKEVLPVFSFADSNDQVVSEVIKSSIAIVNSTSPR), 436-474 (STNVSELFPIIAARMKLAKETQVPLFLKLVESLNRFDNT), 703-742 (ETHRAPLLQTIVKLVNEGKIEVADNSFFQFITTACNQIPD), 846-885 (QKHIDSAVPIILNAYESSEKTIIRGSLVDSLSIAADACNE), and 999-1037 (PILDSIILPKIFDQLQAEDSFKKIITMGPYKYVLDEGLE).

This sequence belongs to the CAND family.

Its function is as follows. Key assembly factor of SCF (SKP1-CUL1-F-box protein) E3 ubiquitin ligase complexes that promotes the exchange of the substrate-recognition F-box subunit in SCF complexes, thereby playing a key role in the cellular repertoire of SCF complexes. Acts as a F-box protein exchange factor. This chain is Cullin-associated NEDD8-dissociated protein 1 (TIP120), found in Candida albicans (strain SC5314 / ATCC MYA-2876) (Yeast).